The following is a 404-amino-acid chain: Short chain dehydrogenase sirR (404 aa).

A signal peptide spans 1 to 28 (MHSKPQRALVIGATGVSGWSLCLQLLQT). S56 and L58 together coordinate NADP(+). N-linked (GlcNAc...) asparagine glycosylation is found at N67 and N157. S237 functions as the Proton donor in the catalytic mechanism. A glycan (N-linked (GlcNAc...) asparagine) is linked at N274. V291 is an NADP(+) binding site.

The protein belongs to the short-chain dehydrogenases/reductases (SDR) family. Highly divergent.

The protein operates within mycotoxin biosynthesis. Functionally, short chain dehydrogenase; part of the gene cluster that mediates the biosynthesis of sirodesmin PL, an epipolythiodioxopiperazine (ETP) characterized by a disulfide bridged cyclic dipeptide and that acts as a phytotoxin which is involved in the blackleg didease of canola. SirD catalyzes the O-prenylation of L-tyrosine (L-Tyr) in the presence of dimethylallyl diphosphate (DMAPP) to yield 4-O-dimethylallyl-L-Tyr, and therefore represents probably the first pathway-specific enzyme in the biosynthesis of sirodesmin PL. 4-O-dimethylallyl-L-Tyr, then undergoes condensation with L-Ser in a reaction catalyzed by the non-ribosomal peptide synthase sirP to form the diketopiperazine (DKP) backbone. Further bishydroxylation of the DKP performed by the cytochrome P450 monooxygenase sirC leads to the production of the intermediate phomamide. This step is essential to form the reactive thiol group required for toxicity of sirodesmin PL. The next steps of sirodesmin biosynthesis are not well understood yet, but some predictions could be made from intermediate compounds identification. Phomamide is converted into phomalizarine via oxidation, probably by sirT. Further oxidation, methylation (by sirM or sirN) and reduction steps convert phomalizarine to deacetyl sirodesmin. Finally, acetyltransferase sirH probably acetylates deacetyl sirodesmin to produce sirodesmin PL. This chain is Short chain dehydrogenase sirR, found in Leptosphaeria maculans (Blackleg fungus).